The sequence spans 291 residues: uncharacterized protein (291 aa).

The HTH tetR-type domain occupies 2-62 (KEKEKLIIET…SMLNYYYDKT (61 aa)). The segment at residues 25–44 (SVQEIAKECKISKGAFYIYF) is a DNA-binding region (H-T-H motif).

This is an uncharacterized protein from Bacillus subtilis (strain 168).